The chain runs to 855 residues: DNA mismatch repair protein MutS (855 aa).

An ATP-binding site is contributed by 613 to 620 (GPNMGGKS). Residues 796–817 (TTSLPHEQPRAKPGKPAIPQQS) form a disordered region.

This sequence belongs to the DNA mismatch repair MutS family.

In terms of biological role, this protein is involved in the repair of mismatches in DNA. It is possible that it carries out the mismatch recognition step. This protein has a weak ATPase activity. This Pseudomonas syringae pv. tomato (strain ATCC BAA-871 / DC3000) protein is DNA mismatch repair protein MutS.